An 82-amino-acid polypeptide reads, in one-letter code: Small ribosomal subunit protein bS16 (82 aa).

Belongs to the bacterial ribosomal protein bS16 family.

The polypeptide is Small ribosomal subunit protein bS16 (Natranaerobius thermophilus (strain ATCC BAA-1301 / DSM 18059 / JW/NM-WN-LF)).